We begin with the raw amino-acid sequence, 267 residues long: O-methyltransferase (267 aa).

Residues Gln100 and His145 each coordinate S-adenosyl-L-methionine.

The protein belongs to the methyltransferase superfamily.

It functions in the pathway antifungal biosynthesis. Functionally, O-methyltransferase; part of the gene cluster that mediates the biosynthesis of the tetrahydropyranyl antifungal agent lanomycin that acts as an inhibitor of CYP51 and blocks the ergosterol biosynthesis. The biosynthesis probably begins with the formation of an hexaketide, followed by methionine mediated alkylation of C-2 and C-6, and methylation of the reduced C-3 oxygen, pyran forming reductive ring closure, oxygenation of C-4, beta-keto reduction, enoyl reduction and dehydration of the remaining oxygens, and finally, acylation with glycine to complete the biosynthesis. The sequence is that of O-methyltransferase from Pyrenophora dematioidea (Helminthosporium dematioideum).